Reading from the N-terminus, the 129-residue chain is Phosphoribosyl-AMP cyclohydrolase (129 aa).

Residue Asp87 participates in Mg(2+) binding. Residue Cys88 coordinates Zn(2+). 2 residues coordinate Mg(2+): Asp89 and Asp91. Zn(2+) contacts are provided by Cys104 and Cys111.

This sequence belongs to the PRA-CH family. In terms of assembly, homodimer. Mg(2+) serves as cofactor. The cofactor is Zn(2+).

It is found in the cytoplasm. The enzyme catalyses 1-(5-phospho-beta-D-ribosyl)-5'-AMP + H2O = 1-(5-phospho-beta-D-ribosyl)-5-[(5-phospho-beta-D-ribosylamino)methylideneamino]imidazole-4-carboxamide. It participates in amino-acid biosynthesis; L-histidine biosynthesis; L-histidine from 5-phospho-alpha-D-ribose 1-diphosphate: step 3/9. In terms of biological role, catalyzes the hydrolysis of the adenine ring of phosphoribosyl-AMP. In Ruegeria sp. (strain TM1040) (Silicibacter sp.), this protein is Phosphoribosyl-AMP cyclohydrolase.